We begin with the raw amino-acid sequence, 194 residues long: Ribonuclease HII (194 aa).

The 191-residue stretch at 3-193 (ILTAGVDEAG…VRNLLAQQTL (191 aa)) folds into the RNase H type-2 domain. Positions 9, 10, and 101 each coordinate a divalent metal cation.

It belongs to the RNase HII family. Mn(2+) serves as cofactor. The cofactor is Mg(2+).

Its subcellular location is the cytoplasm. The catalysed reaction is Endonucleolytic cleavage to 5'-phosphomonoester.. Functionally, endonuclease that specifically degrades the RNA of RNA-DNA hybrids. The chain is Ribonuclease HII from Neisseria meningitidis serogroup C (strain 053442).